We begin with the raw amino-acid sequence, 295 residues long: 4-hydroxy-tetrahydrodipicolinate synthase (295 aa).

Thr48 serves as a coordination point for pyruvate. The active-site Proton donor/acceptor is the Tyr135. Lys163 acts as the Schiff-base intermediate with substrate in catalysis. Val204 is a binding site for pyruvate.

This sequence belongs to the DapA family. Homotetramer; dimer of dimers.

The protein localises to the cytoplasm. The enzyme catalyses L-aspartate 4-semialdehyde + pyruvate = (2S,4S)-4-hydroxy-2,3,4,5-tetrahydrodipicolinate + H2O + H(+). It functions in the pathway amino-acid biosynthesis; L-lysine biosynthesis via DAP pathway; (S)-tetrahydrodipicolinate from L-aspartate: step 3/4. Its function is as follows. Catalyzes the condensation of (S)-aspartate-beta-semialdehyde [(S)-ASA] and pyruvate to 4-hydroxy-tetrahydrodipicolinate (HTPA). This Francisella philomiragia subsp. philomiragia (strain ATCC 25017 / CCUG 19701 / FSC 153 / O#319-036) protein is 4-hydroxy-tetrahydrodipicolinate synthase.